The primary structure comprises 302 residues: Probable alpha-L-glutamate ligase (302 aa).

One can recognise an ATP-grasp domain in the interval 105–288 (LQLLARKGIP…LAGKIIEYIE (184 aa)). Residues Lys142, 179–180 (EF), Asp188, and 212–214 (RAN) contribute to the ATP site. Asp249, Glu261, and Asn263 together coordinate Mg(2+). Residues Asp249, Glu261, and Asn263 each coordinate Mn(2+).

This sequence belongs to the RimK family. Mg(2+) is required as a cofactor. Requires Mn(2+) as cofactor.

The sequence is that of Probable alpha-L-glutamate ligase from Legionella pneumophila (strain Paris).